Here is a 1136-residue protein sequence, read N- to C-terminus: Pesticidal crystal protein Cry4B protoxin (1136 aa).

The tract at residues 84–282 (TPERVWNDFM…PADKIDNTKL (199 aa)) is domain I. The domain II stretch occupies residues 283 to 466 (SKTEFTREIY…SNRVSFAWTH (184 aa)). Residues 467–641 (KIVDPNNQIY…PITQSVLDET (175 aa)) are domain III.

The protein belongs to the delta endotoxin family. As to quaternary structure, in the presence of micelles active toxin forms oligomers that can be fit into cryo-EM maps as trimers. Binds to host (A.gambiae) cadherin AgCad1 (also called BT-R3), probably on the cell surface. Activated toxin may bind its host AgCad1 receptor as a monomer, but also forms an oligomer that is not active. The cofactor is Mg(2+). Post-translationally, treatment of recombinant protein with A.aegypti 3rd instar larvae midgut extract for 1 hour yields major bands of 72 and 45 kDa, the combined proteins are toxic to mosquitoes. Longer digestion, which removes the 72 kDa protein, yields a non-toxic preparation. Proteolysis by yields a 65 kDa toxic protein and 48 and 17 kDa fragments which are not toxic. Host (A.gambiae) larval midgut; binds to host brush border membranes, probably to cadherin-AgCad1 (Cad1, also called BT-R3).

It is found in the spore. With respect to regulation, toxic activity on Trichoplusia ni insect cells stably transfected with the AgCad1/BT-R3 receptor leads to oncosis, cell death characterized by cell swelling, membrane blebbing and depletion of energy reserves. Cell death is blocked by EDTA (but not EGTA) and is partially prevented by pretreatment with NF449 (inhibits G-s-alpha-60A and adenylyl cyclase, AC) and 2',5'-dideoxyadenosine 3'-diphosphate (ddADP, inhibits AC), while H-89 and PKAI 14-22 (both inhibit protein kinase A), ouabain (inhibits Na+/K+-ATPase) and a cell exocytosis inhibitor (Exo1) nearly completely prevent the action of the toxin in this system. The cAMP analog pCPT-cAMP and the AC activator FSK enhance toxicity. Its function is as follows. A pesticidal protein active against Aedes and Anopheles mosquito species; activity on Culex species is strain dependent. It remains toxic to permethrin-resistant strains of A.gambiae. Following activation of the protoxin by mosquito larvae midgut extract (or by chymotrypsin or trypsin treatment) it becomes insecticidal. Causes mosquito cell death by activating a host G-protein-coupled receptor which subsequently activates adenylyl cyclase and increases cAMP production. cAMP activates protein kinase A which sets off a series of downstream events which includes increased exocytosis (probably bringing more receptor to the cell membrane), Na+/K+-ATPase activation and eventual host cell death. Another group suggests that alkaline phosphatase serves as the insect receptor and that the protein forms pores in insect cell membranes. In Bacillus thuringiensis subsp. israelensis, this protein is Pesticidal crystal protein Cry4B protoxin.